A 191-amino-acid chain; its full sequence is Small ribosomal subunit protein uS10c (191 aa).

The N-terminal 56 residues, 1 to 56 (MAVSTVSSFLLPSFGIPSSSPSSTRLKVSLLPSSSTHGGLSSCVLTKPSVSLTKVF), are a transit peptide targeting the chloroplast.

The protein belongs to the universal ribosomal protein uS10 family. In terms of assembly, part of the 30S ribosomal subunit.

The protein localises to the plastid. It is found in the chloroplast. The chain is Small ribosomal subunit protein uS10c (RPS10) from Arabidopsis thaliana (Mouse-ear cress).